We begin with the raw amino-acid sequence, 368 residues long: UDP-N-acetylenolpyruvoylglucosamine reductase (368 aa).

The FAD-binding PCMH-type domain maps to 32–199; it reads IGGKPRSAVR…LAIELQLLTD (168 aa). Residue Arg177 is part of the active site. Catalysis depends on Ser257, which acts as the Proton donor. The active site involves Glu358.

Belongs to the MurB family. The cofactor is FAD.

It localises to the cytoplasm. The catalysed reaction is UDP-N-acetyl-alpha-D-muramate + NADP(+) = UDP-N-acetyl-3-O-(1-carboxyvinyl)-alpha-D-glucosamine + NADPH + H(+). It participates in cell wall biogenesis; peptidoglycan biosynthesis. Cell wall formation. This chain is UDP-N-acetylenolpyruvoylglucosamine reductase, found in Corynebacterium glutamicum (strain R).